Reading from the N-terminus, the 198-residue chain is MEHYISLFVKSVFIENMALSFFLGMCTFLAVSKKVSTAFGLGVAVTVVLGISVPVNQLVYSLILKDGALIDGVDLSFLNFITFIGVIAALVQILEMILDKYFPALYNALGIFLPLITVNCAIFGGVSFMVQRDYNFAESVVYGIGAGTGWMLAIVALAGITEKMKYADVPAGLRGLGITFITVGLMALGFMSFSGVQL.

The next 6 membrane-spanning stretches (helical) occupy residues 11–31, 35–55, 77–97, 110–130, 140–160, and 176–196; these read SVFI…FLAV, VSTA…SVPV, FLNF…LEMI, GIFL…SFMV, VVYG…LAGI, and LGIT…FSGV.

It belongs to the NqrDE/RnfAE family. In terms of assembly, composed of six subunits; NqrA, NqrB, NqrC, NqrD, NqrE and NqrF.

Its subcellular location is the cell inner membrane. It carries out the reaction a ubiquinone + n Na(+)(in) + NADH + H(+) = a ubiquinol + n Na(+)(out) + NAD(+). Its function is as follows. NQR complex catalyzes the reduction of ubiquinone-1 to ubiquinol by two successive reactions, coupled with the transport of Na(+) ions from the cytoplasm to the periplasm. NqrA to NqrE are probably involved in the second step, the conversion of ubisemiquinone to ubiquinol. The sequence is that of Na(+)-translocating NADH-quinone reductase subunit E from Histophilus somni (strain 129Pt) (Haemophilus somnus).